Reading from the N-terminus, the 748-residue chain is Far upstream element-binding protein 2 (748 aa).

The disordered stretch occupies residues 1–78; sequence MSDYNTGGPP…GIRKDAFADA (78 aa). Serine 2 bears the N-acetylserine mark. Over residues 8-17 the composition is skewed to pro residues; the sequence is GPPPGPPPPA. Composition is skewed to gly residues over residues 18-28 and 36-69; these read GGGGGAAGAGG and GAGD…GGPG. Arginine 40 carries the post-translational modification Omega-N-methylarginine. Lysine 88 carries the post-translational modification N6-acetyllysine. Residues 90-148 form a disordered region; that stretch reads GGDAATTVNNNTPDFGFGGQKRQLEDGDQPDSKKLASQGDSIGSQLGPIHPPPRTSMTE. Phosphothreonine is present on threonine 101. Over residues 111-123 the composition is skewed to basic and acidic residues; it reads RQLEDGDQPDSKK. A Glycyl lysine isopeptide (Lys-Gly) (interchain with G-Cter in SUMO1); alternate cross-link involves residue lysine 122. Lysine 122 is covalently cross-linked (Glycyl lysine isopeptide (Lys-Gly) (interchain with G-Cter in SUMO2); alternate). Residues serine 126, serine 130, serine 182, serine 185, serine 194, and serine 275 each carry the phosphoserine modification. 3 consecutive KH domains span residues 145–209, 234–300, and 323–387; these read SMTE…KMML, GTVQ…CEMV, and GGGI…ARII. The tract at residues 394–422 is disordered; sequence LRSGPPGPPGAPGMPPGGRGRGRGQGNWG. The span at 398 to 408 shows a compositional bias: pro residues; that stretch reads PPGPPGAPGMP. The segment covering 409–422 has biased composition (gly residues); sequence PGGRGRGRGQGNWG. Arginine 412, arginine 414, arginine 416, and arginine 443 each carry omega-N-methylarginine. The region spanning 425–492 is the KH 4 domain; sequence GGEMTFSIPT…QQIDHAKQLI (68 aa). Serine 481 bears the Phosphoserine mark. The interval 498–570 is disordered; the sequence is GPLCPVGPGP…HDPNKAAAAA (73 aa). Composition is skewed to pro residues over residues 502-521 and 529-543; these read PVGP…PFNP and PGAP…PHQY. Repeat unit 1 spans residues 572–583; that stretch reads DPNAAWAAYYSH. Positions 572–685 are 4 X 12 AA imperfect repeats; sequence DPNAAWAAYY…SAAWAEYYRQ (114 aa). Residues 588–614 are compositionally biased toward pro residues; it reads PPGPVPGPAPAPAAPPAQGEPPQPPPT. Disordered regions lie at residues 588-650, 659-678, and 689-735; these read PPGP…KAWE, VATG…YSAA, and YYGQ…PALV. Tandem repeats lie at residues 618–629, 644–655, and 674–685.

This sequence belongs to the KHSRP family. As to quaternary structure, part of a ternary complex containing FUBP2, PTBP1, PTBP2 and HNRPH1. Interacts with PARN. Interacts with PQBP1.

The protein localises to the nucleus. The protein resides in the cytoplasm. In terms of biological role, binds to the dendritic targeting element and may play a role in mRNA trafficking. Part of a ternary complex that binds to the downstream control sequence (DCS) of the pre-mRNA. Mediates exon inclusion in transcripts that are subject to tissue-specific alternative splicing. May interact with single-stranded DNA from the far-upstream element (FUSE). May activate gene expression. Also involved in degradation of inherently unstable mRNAs that contain AU-rich elements (AREs) in their 3'-UTR, possibly by recruiting degradation machinery to ARE-containing mRNAs. The sequence is that of Far upstream element-binding protein 2 (Khsrp) from Mus musculus (Mouse).